Reading from the N-terminus, the 245-residue chain is Phosducin (245 aa).

A disordered region spans residues M1 to R67. The Phosducin domain occupies M1–E241. The segment covering S58 to R67 has biased composition (basic and acidic residues). At S73 the chain carries Phosphoserine; by PKA. The segment at Y111–E245 is thioredoxin fold.

Belongs to the phosducin family. In terms of assembly, forms a complex with the beta and gamma subunits of the GTP-binding protein, transducin. Interacts with CRX. Post-translationally, light-induced changes in cyclic nucleotide levels modulate the phosphorylation of this protein by cAMP kinase.

The protein localises to the cytoplasm. It localises to the cytosol. It is found in the nucleus. Its subcellular location is the cell projection. The protein resides in the cilium. The protein localises to the photoreceptor outer segment. It localises to the photoreceptor inner segment. In terms of biological role, may participate in the regulation of visual phototransduction or in the integration of photoreceptor metabolism. Inhibits the transcriptional activation activity of the cone-rod homeobox CRX. In Equus caballus (Horse), this protein is Phosducin (PDC).